Reading from the N-terminus, the 509-residue chain is ATP synthase subunit alpha (509 aa).

169 to 176 (GDRQTGKT) contributes to the ATP binding site.

The protein belongs to the ATPase alpha/beta chains family. In terms of assembly, F-type ATPases have 2 components, CF(1) - the catalytic core - and CF(0) - the membrane proton channel. CF(1) has five subunits: alpha(3), beta(3), gamma(1), delta(1), epsilon(1). CF(0) has three main subunits: a(1), b(2) and c(9-12). The alpha and beta chains form an alternating ring which encloses part of the gamma chain. CF(1) is attached to CF(0) by a central stalk formed by the gamma and epsilon chains, while a peripheral stalk is formed by the delta and b chains.

It is found in the cell inner membrane. It catalyses the reaction ATP + H2O + 4 H(+)(in) = ADP + phosphate + 5 H(+)(out). Functionally, produces ATP from ADP in the presence of a proton gradient across the membrane. The alpha chain is a regulatory subunit. In Agrobacterium fabrum (strain C58 / ATCC 33970) (Agrobacterium tumefaciens (strain C58)), this protein is ATP synthase subunit alpha.